The primary structure comprises 252 residues: Phosphate import ATP-binding protein PstB (252 aa).

The 242-residue stretch at 6-247 (ITINNLNFYY…PRDKRTEDYI (242 aa)) folds into the ABC transporter domain. 38 to 45 (GPSGCGKS) is an ATP binding site.

Belongs to the ABC transporter superfamily. Phosphate importer (TC 3.A.1.7) family. The complex is composed of two ATP-binding proteins (PstB), two transmembrane proteins (PstC and PstA) and a solute-binding protein (PstS).

It localises to the cell membrane. It catalyses the reaction phosphate(out) + ATP + H2O = ADP + 2 phosphate(in) + H(+). Its function is as follows. Part of the ABC transporter complex PstSACB involved in phosphate import. Responsible for energy coupling to the transport system. The protein is Phosphate import ATP-binding protein PstB of Moorella thermoacetica (strain ATCC 39073 / JCM 9320).